We begin with the raw amino-acid sequence, 1265 residues long: Kinesin-related protein 13 (1265 aa).

Residues N23 to I350 form the Kinesin motor domain. ATP is bound at residue G106–T113. Positions L331 to I459 form a coiled coil. Disordered regions lie at residues K918–I1026, S1085–L1119, L1127–S1146, L1158–L1214, and F1245–K1265. Over residues I930–S951 the composition is skewed to low complexity. Composition is skewed to polar residues over residues H960 to C980, L1003 to I1026, and S1085 to L1097. Composition is skewed to low complexity over residues Q1100 to L1119 and Q1128 to S1146. A compositionally biased stretch (acidic residues) spans L1158–D1169. Low complexity predominate over residues S1174–V1195. The segment covering T1250–K1265 has biased composition (polar residues).

This sequence belongs to the TRAFAC class myosin-kinesin ATPase superfamily. Kinesin family. BimC subfamily.

The protein resides in the cytoplasm. It is found in the cytoskeleton. Microtubule-associated force-producing protein that plays a role in organelle transport. Its motor activity is directed toward the microtubule's plus end. Cooperates with dynein to control the spindle elongation rate, but is dispensable for mitosis. In Dictyostelium discoideum (Social amoeba), this protein is Kinesin-related protein 13 (kif13).